Consider the following 257-residue polypeptide: Zinc transporter ZupT (257 aa).

The next 3 membrane-spanning stretches (helical) occupy residues 5–25 (LILT…GVLG), 32–52 (LLAF…LMEM), and 61–81 (GMSP…YFGL). 2 residues coordinate Fe(2+): asparagine 120 and glutamate 123. Residues glutamate 123 and histidine 148 each coordinate Zn(2+). The next 4 membrane-spanning stretches (helical) occupy residues 137 to 157 (LGFG…LAVA), 171 to 191 (ILWA…AWLI), 195 to 215 (MISP…MVAL), and 236 to 256 (GVLC…TAGI). Fe(2+)-binding residues include asparagine 149, glutamate 152, and glutamate 181. Glutamate 152 serves as a coordination point for Zn(2+).

Belongs to the ZIP transporter (TC 2.A.5) family. ZupT subfamily.

It localises to the cell inner membrane. It carries out the reaction Zn(2+)(in) = Zn(2+)(out). In terms of biological role, mediates zinc uptake. May also transport other divalent cations. In Escherichia coli O45:K1 (strain S88 / ExPEC), this protein is Zinc transporter ZupT.